The sequence spans 169 residues: Fumarase E (169 aa).

The protein belongs to the MtlR/FumE family. Homodimer.

The catalysed reaction is (S)-malate = fumarate + H2O. In terms of biological role, in vitro catalyzes the addition of water to fumarate, forming malate. Cannot catalyze the reverse reaction. Cannot use the cis-isomer maleate as substrate. In Shigella flexneri, this protein is Fumarase E.